Reading from the N-terminus, the 285-residue chain is Probable endonuclease 4 (285 aa).

Zn(2+) is bound by residues His69, His109, Glu145, Asp179, His182, His216, Asp229, His231, and Glu261.

It belongs to the AP endonuclease 2 family. Zn(2+) is required as a cofactor.

The enzyme catalyses Endonucleolytic cleavage to 5'-phosphooligonucleotide end-products.. In terms of biological role, endonuclease IV plays a role in DNA repair. It cleaves phosphodiester bonds at apurinic or apyrimidinic (AP) sites, generating a 3'-hydroxyl group and a 5'-terminal sugar phosphate. The sequence is that of Probable endonuclease 4 from Salmonella dublin (strain CT_02021853).